A 350-amino-acid polypeptide reads, in one-letter code: Protein-glutamate methylesterase/protein-glutamine glutaminase 1 (350 aa).

Residues 6–123 form the Response regulatory domain; it reads RVLVVDDSAL…GRSVENYAEE (118 aa). Position 57 is a 4-aspartylphosphate (D57). One can recognise a CheB-type methylesterase domain in the interval 159 to 350; that stretch reads LGASGKIIFV…ARRVLGAVSA (192 aa). Residues S171, H197, and D293 contribute to the active site.

The protein belongs to the CheB family. Post-translationally, phosphorylated by CheA. Phosphorylation of the N-terminal regulatory domain activates the methylesterase activity.

It is found in the cytoplasm. The enzyme catalyses [protein]-L-glutamate 5-O-methyl ester + H2O = L-glutamyl-[protein] + methanol + H(+). It carries out the reaction L-glutaminyl-[protein] + H2O = L-glutamyl-[protein] + NH4(+). Functionally, involved in chemotaxis. Part of a chemotaxis signal transduction system that modulates chemotaxis in response to various stimuli. Catalyzes the demethylation of specific methylglutamate residues introduced into the chemoreceptors (methyl-accepting chemotaxis proteins or MCP) by CheR. Also mediates the irreversible deamidation of specific glutamine residues to glutamic acid. The polypeptide is Protein-glutamate methylesterase/protein-glutamine glutaminase 1 (Dechloromonas aromatica (strain RCB)).